The primary structure comprises 120 residues: MFLIYEYDIFWAFLIISSVIPILAFLISGVLSPISKGPEKLSSYESGIEPIGDAWLQFRIRYYMFALVFVVFDVETVFLYPWAMSFDVLGLSVFIEALIFVLILIVGSVYAWRKGALEWS.

The next 3 helical transmembrane spans lie at 9-29 (IFWA…LISG), 64-84 (MFAL…PWAM), and 88-108 (VLGL…IVGS).

This sequence belongs to the complex I subunit 3 family. As to quaternary structure, NDH is composed of at least 16 different subunits, 5 of which are encoded in the nucleus.

Its subcellular location is the plastid. It localises to the chloroplast thylakoid membrane. The catalysed reaction is a plastoquinone + NADH + (n+1) H(+)(in) = a plastoquinol + NAD(+) + n H(+)(out). The enzyme catalyses a plastoquinone + NADPH + (n+1) H(+)(in) = a plastoquinol + NADP(+) + n H(+)(out). In terms of biological role, NDH shuttles electrons from NAD(P)H:plastoquinone, via FMN and iron-sulfur (Fe-S) centers, to quinones in the photosynthetic chain and possibly in a chloroplast respiratory chain. The immediate electron acceptor for the enzyme in this species is believed to be plastoquinone. Couples the redox reaction to proton translocation, and thus conserves the redox energy in a proton gradient. The protein is NAD(P)H-quinone oxidoreductase subunit 3, chloroplastic of Manihot esculenta (Cassava).